The sequence spans 580 residues: WD repeat-containing protein 46 (580 aa).

Positions 34 to 108 are disordered; it reads SWKEYKKMKQ…QQEKMKVTKD (75 aa). 2 stretches are compositionally biased toward basic and acidic residues: residues 64–85 and 98–108; these read TEGR…HDTG and LQQEKMKVTKD. WD repeat units lie at residues 193–234, 235–272, 274–312, 315–354, 357–396, and 399–436; these read AALD…YTYV, YDNL…NSFL, YVDV…HTNG, SLWS…GLDR, RIWD…NHVQ, and RGMH…IGHA.

Part of the small subunit (SSU) processome.

Its subcellular location is the nucleus. The protein resides in the nucleolus. Functionally, scaffold component of the nucleolar structure. Part of the small subunit (SSU) processome, first precursor of the small eukaryotic ribosomal subunit. Required for 18S rRNA processing. Plays a role in negative regulation of detoxification genes by inhibiting protein levels of transcription factor skn-1, leading to down-regulation of skn-1 target genes. This Caenorhabditis elegans protein is WD repeat-containing protein 46.